The following is a 541-amino-acid chain: MDKQESFFVGHKSHRCSQNRSVSQIHQRTSRLSECYTVPLQWPHGIVWHNNNSLLKGLEAGNGQSVQTDPSKSGFVGDTVELKCLFINGKPPVKISQVTWQKLINGTKQNVAIANPALGVSVLTPFKDRVSFKHPAVRQRTPSSLEDTTIVFSSLRLSDEAAYICEYTTFPAGNRENMVNLTVFARPVTKMTLTSPTIVARTPKRKMPVATCMSANGKPPSVIKWDTTLKGEATFQETRNPNGTVTVRSNYIVLPSRETHRQKLTCIVTYRSERFTDSVILNVQYEPEVKIEGFDGNWYLNRPNVQLTCNADANPPVTVYQWKLLNGSLPNNIEIKNNTLFFKGPVTYELGGTYVCEATNSIGTRSGLVEVNVTELPNIPFDEREIPAELHSSGAAIGGAVGGVALLVAAIALLVFFLRRRQRTFKGDYSTKKHVFGNGYSKAGGMPAHPPMPKNLQYPDDSDDEKKPAQISGPGGFESGDRDFDGNSEDLKRPYFTVDEGESRDYDERTLAFQYDPEPEIADDMVSQTDGSVISKKEWYV.

The N-terminal stretch at 1–21 is a signal peptide; the sequence is MDKQESFFVGHKSHRCSQNRS. The Extracellular segment spans residues 22 to 396; it reads VSQIHQRTSR…PAELHSSGAA (375 aa). N-linked (GlcNAc...) asparagine glycans are attached at residues asparagine 51, asparagine 105, asparagine 180, asparagine 242, asparagine 326, asparagine 337, and asparagine 372. An Ig-like V-type domain is found at 77–182; sequence GDTVELKCLF…GNRENMVNLT (106 aa). An intrachain disulfide couples cysteine 84 to cysteine 165. Ig-like C2-type domains are found at residues 187–282 and 287–374; these read PVTK…VILN and PEVK…VNVT. Cystine bridges form between cysteine 212–cysteine 266 and cysteine 309–cysteine 356. A helical transmembrane segment spans residues 397 to 417; sequence IGGAVGGVALLVAAIALLVFF. At 418–541 the chain is on the cytoplasmic side; it reads LRRRQRTFKG…SVISKKEWYV (124 aa). Residues 440-507 form a disordered region; sequence YSKAGGMPAH…VDEGESRDYD (68 aa). The segment covering 479–493 has biased composition (basic and acidic residues); that stretch reads SGDRDFDGNSEDLKR.

Belongs to the nectin family. Cis- and trans-homodimer. Can form trans-heterodimers. As to expression, expressed in the developing eye and nervous system.

The protein resides in the cell membrane. It is found in the cell junction. It localises to the adherens junction. Its function is as follows. Cell adhesion molecule that promotes cell-cell contacts and plays important roles in the development of the nervous system. Acts by forming homophilic or heterophilic trans-dimers. The protein is Nectin 1b of Danio rerio (Zebrafish).